A 2269-amino-acid chain; its full sequence is Anaphase-promoting complex subunit 1 (2269 aa).

5 disordered regions span residues 305-334, 379-433, 609-644, 804-845, and 1136-1197; these read PSSNAENDNTNNNNNNNNTNTNISNNQTIN, SSPP…QENS, NNNNNNNNNNNNNNNNNNNNNNNNNNNNNNNKRKPL, KVYP…NNNN, and STAS…NSTS. Composition is skewed to low complexity over residues 306 to 334, 379 to 430, 609 to 638, 809 to 845, and 1136 to 1159; these read SSNAENDNTNNNNNNNNTNTNISNNQTIN, SSPP…QQQQ, NNNNNNNNNNNNNNNNNNNNNNNNNNNNNN, NNNNNNNNNNNNNNNNNNNNNNNNNNNNNNNNNNNNN, and STASSSSNEMNSNSNITSINGQSN. Residues 1160-1177 show a composition bias toward polar residues; it reads GLPMNSTTNQMNSHQINN. PC repeat units follow at residues 1440–1472 and 1483–1520; these read AALMGIGLLYCQTSNRRMTEVLLMEIGRKPIND and TAGMALGLVNLGKGANEGSLTDLHVEDRLRSFIGISKE. Residues 1535–1586 form a disordered region; it reads STPSISSNRNNNDLFNNGSNNNSSSNGGGGGGGGNNNGNNSNNGNNGSSQFK. Residues 1540–1559 are compositionally biased toward low complexity; it reads SSNRNNNDLFNNGSNNNSSS. The span at 1560 to 1570 shows a compositional bias: gly residues; that stretch reads NGGGGGGGGNN. A compositionally biased stretch (low complexity) spans 1571 to 1583; that stretch reads NGNNSNNGNNGSS. PC repeat units follow at residues 1605 to 1637, 1722 to 1756, and 1792 to 1807; these read GAIIALSLIYLKTNNLKISNYLSIPDTTFGLNY, GAAFSIGLKYAGSLNENAFSLLMDLIQLFRKRQVY, and LVMAGSGNLETLKILR. Over residues 1960–1993 the composition is skewed to low complexity; the sequence is NNNNNNNNNNNNNNNNNNNNNNNNNNNNNNNNNN. Residues 1960–1997 form a disordered region; the sequence is NNNNNNNNNNNNNNNNNNNNNNNNNNNNNNNNNNKNIL.

It belongs to the APC1 family. The APC/C is composed of at least 13 subunits that stay tightly associated throughout the cell cycle: anapc1, anapc2, anapc3, anapc4, anapc5, anapc6, anapc7, anapc8, anapc10, anapc11, cdc20, cdc26 and cdh1.

It is found in the nucleus. Its pathway is protein modification; protein ubiquitination. In terms of biological role, component of the anaphase promoting complex/cyclosome (APC/C), a cell cycle-regulated E3 ubiquitin-protein ligase complex that controls progression through mitosis and the G1 phase of the cell cycle. The polypeptide is Anaphase-promoting complex subunit 1 (anapc1) (Dictyostelium discoideum (Social amoeba)).